The primary structure comprises 376 residues: Chaperone protein DnaJ (376 aa).

Residues 5–70 enclose the J domain; sequence DYYEILGVSK…QKRAAYDQYG (66 aa). A CR-type zinc finger spans residues 131–209; it reads GVTKEIRIPT…CHGHGRVERS (79 aa). Zn(2+) contacts are provided by Cys144, Cys147, Cys161, Cys164, Cys183, Cys186, Cys197, and Cys200. CXXCXGXG motif repeat units lie at residues 144–151, 161–168, 183–190, and 197–204; these read CDVCHGSG, CPTCHGSG, CPHCQGRG, and CNKCHGHG.

It belongs to the DnaJ family. In terms of assembly, homodimer. The cofactor is Zn(2+).

Its subcellular location is the cytoplasm. Its function is as follows. Participates actively in the response to hyperosmotic and heat shock by preventing the aggregation of stress-denatured proteins and by disaggregating proteins, also in an autonomous, DnaK-independent fashion. Unfolded proteins bind initially to DnaJ; upon interaction with the DnaJ-bound protein, DnaK hydrolyzes its bound ATP, resulting in the formation of a stable complex. GrpE releases ADP from DnaK; ATP binding to DnaK triggers the release of the substrate protein, thus completing the reaction cycle. Several rounds of ATP-dependent interactions between DnaJ, DnaK and GrpE are required for fully efficient folding. Also involved, together with DnaK and GrpE, in the DNA replication of plasmids through activation of initiation proteins. This chain is Chaperone protein DnaJ, found in Shigella flexneri serotype 5b (strain 8401).